The following is a 387-amino-acid chain: O-methyltransferase lepI (387 aa).

Phe135–Phe148 contacts substrate. Residues Cys175–Asp195 are substrate binding. S-adenosyl-L-methionine-binding positions include Gly227–Gly228, Asp252, Asn275–Phe276, and Arg291.

The protein belongs to the class I-like SAM-binding methyltransferase superfamily. Cation-independent O-methyltransferase family.

O-methyltransferase; part of the gene cluster 23 that mediates the biosynthesis of a family of 2-pyridones known as leporins. The hybrid PKS-NRPS synthetase lepA and the enoyl reductase lepG are responsible for fusion of phenylalanine with a hexaketide and subsequent release of the stable tetramic acid precursor, pre-leporin C. Because lepA lacks a designated enoylreductase (ER) domain, the required activity is provided the enoyl reductase lepG. It is possible that the dehydrogenase lepF also participates in production of pre-leporin C. Cytochrome P450 monooxygenase lepH is then required for the ring expansion step to yield leporin C. Leporin C is then presumably further oxidized by the N-hydroxylase lepD to form leporin B. LepI may possess a function in biosynthesis upstream of lepA. Leporin B is further oxidized in the presence of ferric ion to give the leporin B trimer-iron chelate, but whether or not this reaction is catalyzed by an enzyme in the pathway or by ferric ion is not determined yet. The chain is O-methyltransferase lepI from Aspergillus flavus (strain ATCC 200026 / FGSC A1120 / IAM 13836 / NRRL 3357 / JCM 12722 / SRRC 167).